A 539-amino-acid chain; its full sequence is RING finger protein 37 (539 aa).

Residues 226–249 are disordered; that stretch reads PALPMESDCDPGGQSESQHSPCTL. The segment covering 239–249 has biased composition (polar residues); sequence QSESQHSPCTL. The 81-residue stretch at 258–338 folds into the U-box domain; it reads DVPEEFLDPI…DRFLLQHSIS (81 aa). Disordered regions lie at residues 359–399 and 456–479; these read LPSR…EPTA and GTRG…VSGP. The span at 374 to 395 shows a compositional bias: low complexity; it reads HYSLGMSASSSATSPLFSPTTS. The RING-type zinc finger occupies 481–526; the sequence is CASCKQAFSSYSTNEPVYQLPCGHLLCRPCLSEKQRSQPMMCTACR.

Interacts with UBE2L3. Interacts with VCP. As to expression, expressed in testis and placenta.

It localises to the nucleus. It carries out the reaction S-ubiquitinyl-[E2 ubiquitin-conjugating enzyme]-L-cysteine + [acceptor protein]-L-lysine = [E2 ubiquitin-conjugating enzyme]-L-cysteine + N(6)-ubiquitinyl-[acceptor protein]-L-lysine.. Its pathway is protein modification; protein ubiquitination. Functionally, may have a ubiquitin-protein ligase activity acting as an E3 ubiquitin-protein ligase or as a ubiquitin-ubiquitin ligase promoting elongation of ubiquitin chains on substrates. The sequence is that of RING finger protein 37 (Ubox5) from Mus musculus (Mouse).